The sequence spans 185 residues: Ribosome-recycling factor (185 aa).

It belongs to the RRF family.

Its subcellular location is the cytoplasm. Functionally, responsible for the release of ribosomes from messenger RNA at the termination of protein biosynthesis. May increase the efficiency of translation by recycling ribosomes from one round of translation to another. In Methylococcus capsulatus (strain ATCC 33009 / NCIMB 11132 / Bath), this protein is Ribosome-recycling factor.